The sequence spans 59 residues: Large ribosomal subunit protein uL30 (59 aa).

This sequence belongs to the universal ribosomal protein uL30 family. As to quaternary structure, part of the 50S ribosomal subunit.

This chain is Large ribosomal subunit protein uL30, found in Citrifermentans bemidjiense (strain ATCC BAA-1014 / DSM 16622 / JCM 12645 / Bem) (Geobacter bemidjiensis).